A 189-amino-acid chain; its full sequence is Frataxin-like protein, mitochondrial (189 aa).

The transit peptide at 1-50 directs the protein to the mitochondrion; it reads MNCARLHQRIPLRAMALTTTSYPALAPSHSFANASTSVMTASAMAVAHRA.

The protein belongs to the frataxin family. In terms of assembly, interacts with IscU; the interaction is direct.

The protein localises to the mitochondrion. The catalysed reaction is 4 Fe(2+) + O2 + 4 H(+) = 4 Fe(3+) + 2 H2O. In terms of biological role, iron-binding protein which binds 2 iron atoms per monomer. Probably, acts as an iron carrier for the biosynthesis of Fe-S clusters. Stimulates the cysteine desulphurase activity of IscS in the presence of IscU. The protein is Frataxin-like protein, mitochondrial of Leishmania donovani.